Reading from the N-terminus, the 211-residue chain is Protein-methionine-sulfoxide reductase heme-binding subunit MsrQ (211 aa).

Transmembrane regions (helical) follow at residues 45 to 65 (HFTGLTALKFLLAALLITPLA), 82 to 102 (LWCFAWATLHLTSYALLELGV), 116 to 136 (PYLTLGIISWVILLALAFTST), 153 to 173 (FVYLVAILAPIHYLWSVKIIS), and 178 to 198 (IYAGLAVLLLALRYKKLLSLF).

The protein belongs to the MsrQ family. In terms of assembly, heterodimer of a catalytic subunit (MsrP) and a heme-binding subunit (MsrQ). Requires FMN as cofactor. Heme b serves as cofactor.

The protein localises to the cell inner membrane. Functionally, part of the MsrPQ system that repairs oxidized periplasmic proteins containing methionine sulfoxide residues (Met-O), using respiratory chain electrons. Thus protects these proteins from oxidative-stress damage caused by reactive species of oxygen and chlorine generated by the host defense mechanisms. MsrPQ is essential for the maintenance of envelope integrity under bleach stress, rescuing a wide series of structurally unrelated periplasmic proteins from methionine oxidation, including the primary periplasmic chaperone SurA and the lipoprotein Pal. MsrQ provides electrons for reduction to the reductase catalytic subunit MsrP, using the quinone pool of the respiratory chain. The protein is Protein-methionine-sulfoxide reductase heme-binding subunit MsrQ of Escherichia coli O127:H6 (strain E2348/69 / EPEC).